The chain runs to 641 residues: Leucine-rich repeat receptor-like serine/threonine/tyrosine-protein kinase SOBIR1 (641 aa).

Residues 1 to 31 (MAVPTGSANLFLRPLILAVLSFLLLSSFVSS) form the signal peptide. The Extracellular segment spans residues 32 to 284 (VEWLDIDSSD…KKKKSKKKKV (253 aa)). 5 LRR repeats span residues 112–133 (ELKELTLSNNQLVNAVPVDILS), 136–159 (QLEVLDLRKNRFSGQIPGNFSSLS), 160–182 (RLRILDLSSNKLSGNLNFLKNLR), 183–205 (NLENLSVANNLFSGKIPEQIVSF), and 207–228 (NLRFFDFSGNRYLEGPAPVMSS). Residue Asn154 is glycosylated (N-linked (GlcNAc...) asparagine). Asn186 carries an N-linked (GlcNAc...) asparagine glycan. The disordered stretch occupies residues 243–278 (AETPTSSPTNKPNNSTTSKAPKGAPKPGKLKKKKKK). Positions 245 to 259 (TPTSSPTNKPNNSTT) are enriched in polar residues. N-linked (GlcNAc...) asparagine glycosylation is present at Asn256. Residues 260–269 (SKAPKGAPKP) are compositionally biased toward low complexity. Residues 285–305 (AAWILGFVVGAIGGTISGFVF) traverse the membrane as a helical segment. The Cytoplasmic portion of the chain corresponds to 306–641 (SVLFKLIIQA…VRTMLSQIKH (336 aa)). The Protein kinase domain occupies 347–641 (LASLEIIGRG…VRTMLSQIKH (295 aa)). Residues 353-361 (IGRGGCGEV) and Lys377 each bind ATP. Residue Asp489 is the Proton acceptor of the active site.

The protein belongs to the protein kinase superfamily. Ser/Thr protein kinase family. Interacts with CST. Interacts with RLP23. Component of a trimeric complex composed of RLP23, SOBIR1 and BAK1. BAK1 is recruited into a pre-formed RLP23-SOBIR1 complex in a ligand-dependent manner. In terms of processing, autophosphorylated on Ser, Thr and Tyr residues. In terms of tissue distribution, mostly present in leaves and flowers, with increasing expression in older flowers.

The protein localises to the cell membrane. The catalysed reaction is L-seryl-[protein] + ATP = O-phospho-L-seryl-[protein] + ADP + H(+). It carries out the reaction L-threonyl-[protein] + ATP = O-phospho-L-threonyl-[protein] + ADP + H(+). The enzyme catalyses L-tyrosyl-[protein] + ATP = O-phospho-L-tyrosyl-[protein] + ADP + H(+). Functionally, dual specificity kinase acting on both serine/threonine- and tyrosine-containing substrates. Acting as a counterplayer of BIR1, promotes the activation of plant defense and cell death. Component of the RLP23-SOBIR1-BAK1 complex that mediates NLP-triggered immunity. Functions as an inhibitor/regulator of abscission, probably by regulating membrane trafficking during abscission. The polypeptide is Leucine-rich repeat receptor-like serine/threonine/tyrosine-protein kinase SOBIR1 (SOBIR1) (Arabidopsis thaliana (Mouse-ear cress)).